The chain runs to 96 residues: Copper-sensing transcriptional repressor RicR (96 aa).

Thr-2 is modified (N-acetylthreonine). 3 residues coordinate Cu cation: Cys-38, His-63, and Cys-67.

The protein belongs to the CsoR family.

Its subcellular location is the cytoplasm. In terms of biological role, under low copper conditions, represses the expression of lpqS, Rv2963, mymT, socA, socB, mmcO and its own expression. In the presence of copper, RicR dissociates from DNA, leading to the expression of the target genes. Members of the RicR regulon are important for copper resistance during infections and full virulence in a mouse model of infection. This chain is Copper-sensing transcriptional repressor RicR, found in Mycobacterium tuberculosis (strain ATCC 25618 / H37Rv).